We begin with the raw amino-acid sequence, 485 residues long: Glutamyl-tRNA(Gln) amidotransferase subunit A (485 aa).

Residues Lys79 and Ser154 each act as charge relay system in the active site. Ser178 (acyl-ester intermediate) is an active-site residue.

Belongs to the amidase family. GatA subfamily. As to quaternary structure, heterotrimer of A, B and C subunits.

It catalyses the reaction L-glutamyl-tRNA(Gln) + L-glutamine + ATP + H2O = L-glutaminyl-tRNA(Gln) + L-glutamate + ADP + phosphate + H(+). Allows the formation of correctly charged Gln-tRNA(Gln) through the transamidation of misacylated Glu-tRNA(Gln) in organisms which lack glutaminyl-tRNA synthetase. The reaction takes place in the presence of glutamine and ATP through an activated gamma-phospho-Glu-tRNA(Gln). The protein is Glutamyl-tRNA(Gln) amidotransferase subunit A of Staphylococcus aureus (strain bovine RF122 / ET3-1).